Here is a 260-residue protein sequence, read N- to C-terminus: Thiazole synthase (260 aa).

Lysine 96 serves as the catalytic Schiff-base intermediate with DXP. Residues glycine 157, 183-184, and 205-206 each bind 1-deoxy-D-xylulose 5-phosphate; these read AG and AS.

The protein belongs to the ThiG family. Homotetramer. Forms heterodimers with either ThiH or ThiS.

It localises to the cytoplasm. It carries out the reaction [ThiS sulfur-carrier protein]-C-terminal-Gly-aminoethanethioate + 2-iminoacetate + 1-deoxy-D-xylulose 5-phosphate = [ThiS sulfur-carrier protein]-C-terminal Gly-Gly + 2-[(2R,5Z)-2-carboxy-4-methylthiazol-5(2H)-ylidene]ethyl phosphate + 2 H2O + H(+). It participates in cofactor biosynthesis; thiamine diphosphate biosynthesis. In terms of biological role, catalyzes the rearrangement of 1-deoxy-D-xylulose 5-phosphate (DXP) to produce the thiazole phosphate moiety of thiamine. Sulfur is provided by the thiocarboxylate moiety of the carrier protein ThiS. In vitro, sulfur can be provided by H(2)S. In Corynebacterium glutamicum (strain R), this protein is Thiazole synthase.